The following is a 133-amino-acid chain: Large-conductance mechanosensitive channel (133 aa).

Helical transmembrane passes span 10-30 (FAVK…GAFG) and 76-96 (GAFI…FSMV).

It belongs to the MscL family. Homopentamer.

The protein resides in the cell inner membrane. Channel that opens in response to stretch forces in the membrane lipid bilayer. May participate in the regulation of osmotic pressure changes within the cell. The protein is Large-conductance mechanosensitive channel of Haemophilus ducreyi (strain 35000HP / ATCC 700724).